Consider the following 214-residue polypeptide: tRNA (guanine-N(7)-)-methyltransferase (214 aa).

Residues glutamate 44, glutamate 69, aspartate 96, and aspartate 118 each contribute to the S-adenosyl-L-methionine site. Residue aspartate 118 is part of the active site. Residues lysine 122, aspartate 154, and 191–194 (TEYE) each bind substrate.

This sequence belongs to the class I-like SAM-binding methyltransferase superfamily. TrmB family.

The enzyme catalyses guanosine(46) in tRNA + S-adenosyl-L-methionine = N(7)-methylguanosine(46) in tRNA + S-adenosyl-L-homocysteine. Its pathway is tRNA modification; N(7)-methylguanine-tRNA biosynthesis. In terms of biological role, catalyzes the formation of N(7)-methylguanine at position 46 (m7G46) in tRNA. The protein is tRNA (guanine-N(7)-)-methyltransferase of Listeria monocytogenes serotype 4b (strain F2365).